The sequence spans 203 residues: Endo-type membrane-bound lytic murein transglycosylase A (203 aa).

Residues 1–15 form the signal peptide; the sequence is MKLRWFAFLMVLLAG. A lipid anchor (N-palmitoyl cysteine) is attached at C16. C16 carries S-diacylglycerol cysteine lipidation.

The protein belongs to the transglycosylase Slt family.

The protein resides in the cell outer membrane. The catalysed reaction is Endolytic cleavage of the (1-&gt;4)-beta-glycosidic linkage between N-acetylmuramic acid (MurNAc) and N-acetylglucosamine (GlcNAc) residues in peptidoglycan with concomitant formation of a 1,6-anhydrobond in the MurNAc residue.. In terms of biological role, murein-degrading enzyme. May play a role in recycling of muropeptides during cell elongation and/or cell division. Preferentially cleaves at a distance of more than two disaccharide units from the ends of the glycan chain. In Enterobacter sp. (strain 638), this protein is Endo-type membrane-bound lytic murein transglycosylase A.